Consider the following 468-residue polypeptide: Glutathione reductase (468 aa).

Residues Ser-17 and Gly-18 each coordinate FAD. Residue Ser-17 participates in glutathione binding. Arg-24 contributes to the glutathione binding site. Glu-38, Thr-45, Cys-46, and Lys-54 together coordinate FAD. Cysteines 46 and 51 form a disulfide. Position 103 (Tyr-103) interacts with glutathione. Ala-119 is an FAD binding site. Residues Ala-185, Ile-188, Glu-191, Arg-208, Arg-214, and Gly-276 each contribute to the NADP(+) site. Asp-317 provides a ligand contact to FAD. Glu-323 is an NADP(+) binding site. Thr-325 provides a ligand contact to FAD. Arg-333 is a binding site for glutathione. NADP(+) is bound at residue Val-358. Residue Lys-410 coordinates glutathione. His-457 lines the FAD pocket. His-457 serves as the catalytic Proton acceptor.

This sequence belongs to the class-I pyridine nucleotide-disulfide oxidoreductase family. Homodimer. The cofactor is FAD.

It localises to the cytoplasm. The protein resides in the mitochondrion. It catalyses the reaction 2 glutathione + NADP(+) = glutathione disulfide + NADPH + H(+). Its function is as follows. Catalyzes the reduction of glutathione disulfide (GSSG) to reduced glutathione (GSH). Constitutes the major mechanism to maintain a high GSH:GSSG ratio in the cytosol. The polypeptide is Glutathione reductase (gtr-1) (Neurospora crassa (strain ATCC 24698 / 74-OR23-1A / CBS 708.71 / DSM 1257 / FGSC 987)).